A 408-amino-acid chain; its full sequence is S-adenosylmethionine synthase (408 aa).

Residue His-19 participates in ATP binding. Asp-21 serves as a coordination point for Mg(2+). Position 47 (Glu-47) interacts with K(+). Residues Glu-60 and Gln-104 each contribute to the L-methionine site. Positions 104–114 (QSPEIASGVDH) are flexible loop. ATP is bound by residues 185–187 (DAK), 255–256 (RF), Asp-264, 270–271 (RK), Ala-287, and Lys-291. Asp-264 serves as a coordination point for L-methionine. Lys-295 contributes to the L-methionine binding site.

Belongs to the AdoMet synthase family. As to quaternary structure, homotetramer; dimer of dimers. Requires Mg(2+) as cofactor. K(+) serves as cofactor.

It is found in the cytoplasm. The catalysed reaction is L-methionine + ATP + H2O = S-adenosyl-L-methionine + phosphate + diphosphate. Its pathway is amino-acid biosynthesis; S-adenosyl-L-methionine biosynthesis; S-adenosyl-L-methionine from L-methionine: step 1/1. Functionally, catalyzes the formation of S-adenosylmethionine (AdoMet) from methionine and ATP. The overall synthetic reaction is composed of two sequential steps, AdoMet formation and the subsequent tripolyphosphate hydrolysis which occurs prior to release of AdoMet from the enzyme. This chain is S-adenosylmethionine synthase, found in Deinococcus radiodurans (strain ATCC 13939 / DSM 20539 / JCM 16871 / CCUG 27074 / LMG 4051 / NBRC 15346 / NCIMB 9279 / VKM B-1422 / R1).